The following is a 559-amino-acid chain: Polypeptide N-acetylgalactosaminyltransferase 1 (559 aa).

At M1–K8 the chain is on the cytoplasmic side. The chain crosses the membrane as a helical; Signal-anchor for type II membrane protein span at residues V9 to F28. Residues S29–F559 are Lumenal-facing. The interval G45–V65 is disordered. An N-linked (GlcNAc...) asparagine glycan is attached at N95. Cystine bridges form between C106–C339, C330–C408, C442–C459, C482–C497, and C523–C540. A catalytic subdomain A region spans residues L115 to R225. Substrate contacts are provided by D156 and R186. D209 and H211 together coordinate Mn(2+). The segment at P285–R347 is catalytic subdomain B. W316 contacts substrate. Residue H344 participates in Mn(2+) binding. Substrate is bound by residues R347 and Y352. The Ricin B-type lectin domain occupies F429 to R551. N-linked (GlcNAc...) asparagine glycosylation is present at N552.

It belongs to the glycosyltransferase 2 family. GalNAc-T subfamily. Requires Mn(2+) as cofactor. Widely expressed. Expressed in all tissues tested.

The protein localises to the golgi apparatus. Its subcellular location is the golgi stack membrane. It localises to the secreted. It catalyses the reaction L-seryl-[protein] + UDP-N-acetyl-alpha-D-galactosamine = a 3-O-[N-acetyl-alpha-D-galactosaminyl]-L-seryl-[protein] + UDP + H(+). It carries out the reaction L-threonyl-[protein] + UDP-N-acetyl-alpha-D-galactosamine = a 3-O-[N-acetyl-alpha-D-galactosaminyl]-L-threonyl-[protein] + UDP + H(+). Its pathway is protein modification; protein glycosylation. In terms of biological role, catalyzes the initial reaction in O-linked oligosaccharide biosynthesis, the transfer of an N-acetyl-D-galactosamine residue to a serine or threonine residue on the protein receptor. Has a broad spectrum of substrates such as apomucin-, MUC5AC-, MUC1- and MUC2-derived peptides. In Homo sapiens (Human), this protein is Polypeptide N-acetylgalactosaminyltransferase 1.